A 464-amino-acid polypeptide reads, in one-letter code: Argininosuccinate lyase (464 aa).

It belongs to the lyase 1 family. Argininosuccinate lyase subfamily.

It is found in the cytoplasm. The catalysed reaction is 2-(N(omega)-L-arginino)succinate = fumarate + L-arginine. It participates in amino-acid biosynthesis; L-arginine biosynthesis; L-arginine from L-ornithine and carbamoyl phosphate: step 3/3. This is Argininosuccinate lyase from Koribacter versatilis (strain Ellin345).